We begin with the raw amino-acid sequence, 87 residues long: Large ribosomal subunit protein bL31B (87 aa).

The protein belongs to the bacterial ribosomal protein bL31 family. Type B subfamily. As to quaternary structure, part of the 50S ribosomal subunit.

This is Large ribosomal subunit protein bL31B from Paraburkholderia phymatum (strain DSM 17167 / CIP 108236 / LMG 21445 / STM815) (Burkholderia phymatum).